The following is a 339-amino-acid chain: MDLLNVVYIINFILLLLAAITDIKERIIPHKYTIAMIIINLVVGYYYFGFNAIIAFFSTLILCLILSIGMGGGDVKLFTALAPIFAYPNSFVFYIPKYILYLIAISMFIAAVFPMYKILMRYWKDIIPSACYLTMMLGILYYFINIYEIPYASIIIWAYIVLSIFVSRKVPKYKEYTKKLGYLFPAYLLFLYIIDTTYFIKYNVLLTSIIYLCEIILISIVIYALTGVETSDKKHIEELKEGDILRDVIIIDKDGVEVKNLNIMKRIKFLLEHEIKENEKEIILTDGEGLSNEDIRKIKKLYMEGKIPDKLNVIKTYPFVPFVVIGYVIVLMLMKLAII.

Transmembrane regions (helical) follow at residues 3–23 (LLNV…ITDI), 27–47 (IIPH…GYYY), 48–68 (FGFN…ILSI), 75–95 (VKLF…VFYI), 99–119 (ILYL…YKIL), 125–145 (DIIP…YFIN), 146–166 (IYEI…SIFV), 180–200 (LGYL…TYFI), 204–224 (VLLT…VIYA), and 319–339 (FVPF…LAII).

This sequence belongs to the peptidase A24 family.

It is found in the cell membrane. Functionally, peptidase that processes the N-terminus of prepilins. This Methanocaldococcus jannaschii (strain ATCC 43067 / DSM 2661 / JAL-1 / JCM 10045 / NBRC 100440) (Methanococcus jannaschii) protein is Prepilin peptidase EppA.